The primary structure comprises 751 residues: ABC transporter G family member 22 (751 aa).

The tract at residues 26 to 81 is disordered; that stretch reads ADIRSPHGSMDANGVPATAPAAVGGGGTLSRKSSRRLMGMSPGRSSGAGTHIRKSR. The 247-residue stretch at 157-403 folds into the ABC transporter domain; sequence LKFRDVTYKV…FSSIGCSPLI (247 aa). 197 to 204 provides a ligand contact to ATP; sequence GPSGSGKT. The ABC transmembrane type-2 domain maps to 498-707; the sequence is EQYCILFCRG…TYKLLLKVQY (210 aa). 6 consecutive transmembrane segments (helical) span residues 516-536, 552-572, 602-622, 634-654, 666-686, and 722-742; these read FSWL…LLWW, LLFF…IFAF, LPLD…MTGL, LTVF…GAIL, VTVM…PVFI, and GLTE…LAYL.

This sequence belongs to the ABC transporter superfamily. ABCG family. Eye pigment precursor importer (TC 3.A.1.204) subfamily.

Its subcellular location is the membrane. This Arabidopsis thaliana (Mouse-ear cress) protein is ABC transporter G family member 22 (ABCG22).